A 316-amino-acid chain; its full sequence is Transaldolase 2 (316 aa).

K131 (schiff-base intermediate with substrate) is an active-site residue.

It belongs to the transaldolase family. Type 1 subfamily. In terms of assembly, homodimer.

It is found in the cytoplasm. It catalyses the reaction D-sedoheptulose 7-phosphate + D-glyceraldehyde 3-phosphate = D-erythrose 4-phosphate + beta-D-fructose 6-phosphate. Its pathway is carbohydrate degradation; pentose phosphate pathway; D-glyceraldehyde 3-phosphate and beta-D-fructose 6-phosphate from D-ribose 5-phosphate and D-xylulose 5-phosphate (non-oxidative stage): step 2/3. Transaldolase is important for the balance of metabolites in the pentose-phosphate pathway. In Salmonella paratyphi A (strain ATCC 9150 / SARB42), this protein is Transaldolase 2.